We begin with the raw amino-acid sequence, 78 residues long: Acyl carrier protein (78 aa).

The region spanning 2-77 (SDTVERVKKI…DAVKFIDKAS (76 aa)) is the Carrier domain. Residue Ser-37 is modified to O-(pantetheine 4'-phosphoryl)serine.

Belongs to the acyl carrier protein (ACP) family. Post-translationally, 4'-phosphopantetheine is transferred from CoA to a specific serine of apo-ACP by AcpS. This modification is essential for activity because fatty acids are bound in thioester linkage to the sulfhydryl of the prosthetic group.

The protein resides in the cytoplasm. The protein operates within lipid metabolism; fatty acid biosynthesis. Carrier of the growing fatty acid chain in fatty acid biosynthesis. This Bartonella quintana (strain Toulouse) (Rochalimaea quintana) protein is Acyl carrier protein.